We begin with the raw amino-acid sequence, 241 residues long: C-type lectin domain family 9 member A (241 aa).

Topologically, residues 1-34 are cytoplasmic; sequence MHEEEIYTSLQWDIPTSEASQKCPSLSKCPGTWC. The ITAM-like signature appears at 5–10; that stretch reads EIYTSL. A helical; Signal-anchor for type II membrane protein membrane pass occupies residues 35–55; that stretch reads IVTVISCVVCVGLLAASIFLG. Residues 56–241 lie on the Extracellular side of the membrane; sequence IKFSQVSSLV…CEKKAFGSCI (186 aa). 2 N-linked (GlcNAc...) asparagine glycosylation sites follow: Asn81 and Asn88. A disulfide bridge connects residues Cys113 and Cys124. The C-type lectin domain occupies 120–233; sequence NGKSCYYAFD…CSNWKYFICE (114 aa). N-linked (GlcNAc...) asparagine glycosylation is found at Asn135, Asn161, and Asn223. 2 disulfide bridges follow: Cys141–Cys232 and Cys211–Cys224.

Homodimer. In terms of processing, N-glycosylated. In terms of tissue distribution, high expression in the spleen, moderate to low levels in several other tissues and cell types, but no detectable expression in skin dendritic cells or CD4(+) T-cells.

Its subcellular location is the membrane. In terms of biological role, functions as an endocytic receptor on a small subset of myeloid cells specialized for the uptake and processing of material from dead cells. Recognizes filamentous form of actin in association with particular actin-binding domains of cytoskeletal proteins, including spectrin, exposed when cell membranes are damaged, and mediate the cross-presentation of dead-cell associated antigens in a Syk-dependent manner. The sequence is that of C-type lectin domain family 9 member A (Clec9a) from Rattus norvegicus (Rat).